The chain runs to 509 residues: Midnolin (509 aa).

Over residues 1–12 (MDQHPSARSCSS) the composition is skewed to polar residues. Residues 1–27 (MDQHPSARSCSSRGAAPSCESVSGEPP) form a disordered region. One can recognise a Ubiquitin-like domain in the interval 28–102 (MNLYIHSTTG…LTLVPTVEAG (75 aa)). Disordered regions lie at residues 172–295 (GSSE…NTPL), 370–404 (QCTSPNSPAPSPPPSPPHTTGLTGLPTTVPSETQP), and 448–485 (KRLRRKARRDSRAPYHWLPNRKAGRSNSNSSMSSEGSL). The segment covering 176–190 (GTTGLSHGASGSASG) has biased composition (low complexity). Positions 196 to 209 (HNPHPHHPHQHPHH) are enriched in basic residues. Residues 220 to 231 (AFPPSPSIPSIP) are compositionally biased toward pro residues. Over residues 261–285 (PSSACAPSPSSPSPAASCPEASCSA) the composition is skewed to low complexity. A compositionally biased stretch (polar residues) spans 286–295 (KTSGNCNTPL). A compositionally biased stretch (pro residues) spans 376–386 (SPAPSPPPSPP). Low complexity predominate over residues 387–400 (HTTGLTGLPTTVPS).

The protein resides in the nucleus. It is found in the cytoplasm. The protein localises to the cytosol. Its subcellular location is the nucleolus. Facilitates ubiquitin-independent proteasomal degradation of polycomb protein CBX4. Plays a role in inhibiting the activity of glucokinase GCK and both glucose-induced and basal insulin secretion. The polypeptide is Midnolin (midn) (Danio rerio (Zebrafish)).